The primary structure comprises 382 residues: Sulfate adenylyltransferase (382 aa).

This sequence belongs to the sulfate adenylyltransferase family.

It catalyses the reaction sulfate + ATP + H(+) = adenosine 5'-phosphosulfate + diphosphate. Its pathway is sulfur metabolism; hydrogen sulfide biosynthesis; sulfite from sulfate: step 1/3. The sequence is that of Sulfate adenylyltransferase from Staphylothermus marinus (strain ATCC 43588 / DSM 3639 / JCM 9404 / F1).